We begin with the raw amino-acid sequence, 365 residues long: Glial fibrillary acidic protein (365 aa).

Residues 1-5 form a head region; the sequence is REVDR. An IF rod domain is found at 2–310; the sequence is EVDRVMGLND…KLLEGEESRI (309 aa). The tract at residues 6–37 is coil 1A; that stretch reads VMGLNDRFASYIEKVRFLEQQNKMLVAELNQL. The interval 38–48 is linker 1; it reads RGKEPSRLGDI. The tract at residues 49–147 is coil 1B; that stretch reads YQEELRELRR…EEEMRQLQEQ (99 aa). The tract at residues 148 to 163 is linker 12; it reads LIAQQVHVDLDVSKPD. A coil 2A region spans residues 164–185; it reads LTTALKEIRAQFEAMATSNMQE. Positions 186 to 189 are linker 2; that stretch reads TEEW. Residues 190 to 310 form a coil 2B region; it reads YRSKFADLTD…KLLEGEESRI (121 aa). A tail region spans residues 311 to 365; the sequence is TVPVQNFTNLQFRDTSLDTKLTPEAHVKRSIVVRTVETRDGEIIKESTTERKDLP.

This sequence belongs to the intermediate filament family.

This Carassius auratus (Goldfish) protein is Glial fibrillary acidic protein (gfap).